The following is a 327-amino-acid chain: D-threonate 4-phosphate dehydrogenase (327 aa).

2 residues coordinate substrate: His139 and Thr140. A divalent metal cation is bound by residues His169, His213, and His268. Positions 276, 285, and 294 each coordinate substrate.

It belongs to the PdxA family. PdxA2 subfamily. Homodimer. A divalent metal cation serves as cofactor.

It catalyses the reaction 4-O-phospho-D-threonate + NAD(+) = dihydroxyacetone phosphate + CO2 + NADH. Catalyzes the NAD-dependent oxidation and subsequent decarboxylation of D-threonate 4-phosphate to produce dihydroxyacetone phosphate (DHAP). Can also use 4-hydroxy-L-threonine 4-phosphate as substrate. The polypeptide is D-threonate 4-phosphate dehydrogenase (Salmonella typhimurium (strain LT2 / SGSC1412 / ATCC 700720)).